Reading from the N-terminus, the 258-residue chain is Global transcriptional regulator CodY (258 aa).

The tract at residues Met1 to Leu156 is GAF domain. A DNA-binding region (H-T-H motif) is located at residues Ala204–Arg223.

The protein belongs to the CodY family.

Its subcellular location is the cytoplasm. DNA-binding global transcriptional regulator which is involved in the adaptive response to starvation and acts by directly or indirectly controlling the expression of numerous genes in response to nutrient availability. During rapid exponential growth, CodY is highly active and represses genes whose products allow adaptation to nutrient depletion. The chain is Global transcriptional regulator CodY from Clostridium perfringens (strain SM101 / Type A).